Consider the following 565-residue polypeptide: Mannosyl-oligosaccharide 1,2-alpha-mannosidase (565 aa).

Cysteines 320 and 363 form a disulfide. Residue E378 is the Proton donor of the active site. T501 is a Ca(2+) binding site. Basic and acidic residues-rich tracts occupy residues 526 to 538 and 550 to 565; these read NEKAQMRESKVID and KSADQEAKEIIEEIAG. Residues 526–565 are disordered; it reads NEKAQMRESKVIDKSNLPEAQPVDKSADQEAKEIIEEIAG.

It belongs to the glycosyl hydrolase 47 family. Ca(2+) serves as cofactor.

The enzyme catalyses N(4)-(alpha-D-Man-(1-&gt;2)-alpha-D-Man-(1-&gt;2)-alpha-D-Man-(1-&gt;3)-[alpha-D-Man-(1-&gt;2)-alpha-D-Man-(1-&gt;3)-[alpha-D-Man-(1-&gt;2)-alpha-D-Man-(1-&gt;6)]-alpha-D-Man-(1-&gt;6)]-beta-D-Man-(1-&gt;4)-beta-D-GlcNAc-(1-&gt;4)-beta-D-GlcNAc)-L-asparaginyl-[protein] (N-glucan mannose isomer 9A1,2,3B1,2,3) + 4 H2O = N(4)-(alpha-D-Man-(1-&gt;3)-[alpha-D-Man-(1-&gt;3)-[alpha-D-Man-(1-&gt;6)]-alpha-D-Man-(1-&gt;6)]-beta-D-Man-(1-&gt;4)-beta-D-GlcNAc-(1-&gt;4)-beta-D-GlcNAc)-L-asparaginyl-[protein] (N-glucan mannose isomer 5A1,2) + 4 beta-D-mannose. It carries out the reaction N(4)-(alpha-D-Man-(1-&gt;2)-alpha-D-Man-(1-&gt;2)-alpha-D-Man-(1-&gt;3)-[alpha-D-Man-(1-&gt;3)-[alpha-D-Man-(1-&gt;2)-alpha-D-Man-(1-&gt;6)]-alpha-D-Man-(1-&gt;6)]-beta-D-Man-(1-&gt;4)-beta-D-GlcNAc-(1-&gt;4)-beta-D-GlcNAc)-L-asparaginyl-[protein] (N-glucan mannose isomer 8A1,2,3B1,3) + 3 H2O = N(4)-(alpha-D-Man-(1-&gt;3)-[alpha-D-Man-(1-&gt;3)-[alpha-D-Man-(1-&gt;6)]-alpha-D-Man-(1-&gt;6)]-beta-D-Man-(1-&gt;4)-beta-D-GlcNAc-(1-&gt;4)-beta-D-GlcNAc)-L-asparaginyl-[protein] (N-glucan mannose isomer 5A1,2) + 3 beta-D-mannose. It participates in protein modification; protein glycosylation. In terms of biological role, involved in the maturation of Asn-linked oligosaccharides. Trim a single alpha-1,2-linked mannose residue from Man(9)GlcNAc(2) to produce Man(8)GlcNAc(2). The sequence is that of Mannosyl-oligosaccharide 1,2-alpha-mannosidase (MNS1) from Candida albicans (Yeast).